The following is a 196-amino-acid chain: Ribosome maturation factor RimP (196 aa).

The span at lysine 131–lysine 145 shows a compositional bias: basic residues. Positions lysine 131–glutamine 153 are disordered.

Belongs to the RimP family.

It is found in the cytoplasm. Required for maturation of 30S ribosomal subunits. The protein is Ribosome maturation factor RimP of Corynebacterium urealyticum (strain ATCC 43042 / DSM 7109).